Here is a 214-residue protein sequence, read N- to C-terminus: MRIMLLGAPGAGKGTQAQFIMEKYGVPQISTGDMLRAAVKAGTPLGLEAKKVMDAGQLVSDELIIGLVKERVAQDDCAAGFLLDGFPRTIPQADAMASSGIALDHVIEIDVPDEEIVKRMSGRRVHPGSGRVYHIVFNQPKVEGKDDVTGEDLAIRPDDEESTVRKRLDIYHEQTKPLVEYYGAVAAKGDVTYNKFDGTQSVATVSDEIVAVLS.

10–15 is an ATP binding site; sequence GAGKGT. The segment at 30–59 is NMP; the sequence is STGDMLRAAVKAGTPLGLEAKKVMDAGQLV. AMP is bound by residues Thr31, Arg36, 57 to 59, 85 to 88, and Gln92; these read QLV and GFPR. The segment at 122-159 is LID; sequence GRRVHPGSGRVYHIVFNQPKVEGKDDVTGEDLAIRPDD. Residues Arg123 and 132–133 contribute to the ATP site; that span reads VY. AMP-binding residues include Arg156 and Arg167. Residue Gln200 participates in ATP binding.

This sequence belongs to the adenylate kinase family. In terms of assembly, monomer.

The protein localises to the cytoplasm. It carries out the reaction AMP + ATP = 2 ADP. The protein operates within purine metabolism; AMP biosynthesis via salvage pathway; AMP from ADP: step 1/1. Its function is as follows. Catalyzes the reversible transfer of the terminal phosphate group between ATP and AMP. Plays an important role in cellular energy homeostasis and in adenine nucleotide metabolism. The protein is Adenylate kinase of Shewanella halifaxensis (strain HAW-EB4).